The following is a 337-amino-acid chain: Mitochondrial glutathione transporter SLC25A40 (337 aa).

Solcar repeat units lie at residues 14–132, 140–224, and 234–328; these read VTPL…LSAF, NETR…LKRW, and PTFM…GKSF. Helical transmembrane passes span 20 to 40, 104 to 124, 146 to 166, 200 to 221, 240 to 260, and 299 to 319; these read MIASCTGAVLTSLMVTPLDVV, LWSGLPPTLVMAIPATVIYFT, IVAGVVARFGAVTVISPLELI, WAPTILRDVPFSAMYWYNYENL, FTSGALSGSFAAVATLPFDVV, and GLFTGLIPRLVKIVPACAIMI.

Belongs to the mitochondrial carrier (TC 2.A.29) family.

Its subcellular location is the mitochondrion inner membrane. It carries out the reaction glutathione(in) = glutathione(out). Functionally, probable mitochondrial transporter required for glutathione import into mitochondria. Glutathione, which plays key roles in oxidative metabolism, is produced exclusively in the cytosol and is imported in many organelles. Mitochondrial glutathione is required for the activity and stability of proteins containing iron-sulfur clusters, as well as erythropoiesis. The chain is Mitochondrial glutathione transporter SLC25A40 from Mus musculus (Mouse).